The sequence spans 425 residues: Serine--tRNA ligase (425 aa).

233–235 (TAE) is an L-serine binding site. An ATP-binding site is contributed by 264 to 266 (RRE). An L-serine-binding site is contributed by glutamate 287. 351 to 354 (EISS) is an ATP binding site. L-serine is bound at residue serine 385.

This sequence belongs to the class-II aminoacyl-tRNA synthetase family. Type-1 seryl-tRNA synthetase subfamily. As to quaternary structure, homodimer. The tRNA molecule binds across the dimer.

It is found in the cytoplasm. The enzyme catalyses tRNA(Ser) + L-serine + ATP = L-seryl-tRNA(Ser) + AMP + diphosphate + H(+). The catalysed reaction is tRNA(Sec) + L-serine + ATP = L-seryl-tRNA(Sec) + AMP + diphosphate + H(+). It participates in aminoacyl-tRNA biosynthesis; selenocysteinyl-tRNA(Sec) biosynthesis; L-seryl-tRNA(Sec) from L-serine and tRNA(Sec): step 1/1. Its function is as follows. Catalyzes the attachment of serine to tRNA(Ser). Is also able to aminoacylate tRNA(Sec) with serine, to form the misacylated tRNA L-seryl-tRNA(Sec), which will be further converted into selenocysteinyl-tRNA(Sec). This is Serine--tRNA ligase from Synechococcus sp. (strain CC9605).